A 91-amino-acid polypeptide reads, in one-letter code: uncharacterized protein (91 aa).

Helical transmembrane passes span 6 to 26, 37 to 57, and 68 to 88; these read AAAV…INFF, MPVF…FVSI, and IVLN…GALL.

The protein resides in the cell membrane. This is an uncharacterized protein from Bacillus subtilis (strain 168).